The primary structure comprises 240 residues: Adenylate dimethylallyltransferase (240 aa).

This sequence belongs to the isopentenyl transferase family.

The catalysed reaction is dimethylallyl diphosphate + AMP = N(6)-(dimethylallyl)adenosine 5'-phosphate + diphosphate. Transfers dimethylallyl groups to AMP as part of the biosynthesis of cytokinin phytohormones. The protein is Adenylate dimethylallyltransferase (izt) of Agrobacterium fabrum (strain C58 / ATCC 33970) (Agrobacterium tumefaciens (strain C58)).